Reading from the N-terminus, the 1157-residue chain is DNA-directed RNA polymerase subunit beta (1157 aa).

It belongs to the RNA polymerase beta chain family. The RNAP catalytic core consists of 2 alpha, 1 beta, 1 beta' and 1 omega subunit. When a sigma factor is associated with the core the holoenzyme is formed, which can initiate transcription.

It catalyses the reaction RNA(n) + a ribonucleoside 5'-triphosphate = RNA(n+1) + diphosphate. Its function is as follows. DNA-dependent RNA polymerase catalyzes the transcription of DNA into RNA using the four ribonucleoside triphosphates as substrates. This Tropheryma whipplei (strain TW08/27) (Whipple's bacillus) protein is DNA-directed RNA polymerase subunit beta.